The primary structure comprises 439 residues: Ribosomal protein uS12 methylthiotransferase RimO (439 aa).

Residues 7–119 form the MTTase N-terminal domain; it reads KQLCLISLGC…IDIMIAKKQN (113 aa). [4Fe-4S] cluster-binding residues include Cys16, Cys50, Cys82, Cys151, Cys155, and Cys158. Residues 137-368 enclose the Radical SAM core domain; the sequence is TGSSVHAYVK…ALKHQNHSFK (232 aa).

Belongs to the methylthiotransferase family. RimO subfamily. The cofactor is [4Fe-4S] cluster.

It localises to the cytoplasm. It carries out the reaction L-aspartate(89)-[ribosomal protein uS12]-hydrogen + (sulfur carrier)-SH + AH2 + 2 S-adenosyl-L-methionine = 3-methylsulfanyl-L-aspartate(89)-[ribosomal protein uS12]-hydrogen + (sulfur carrier)-H + 5'-deoxyadenosine + L-methionine + A + S-adenosyl-L-homocysteine + 2 H(+). Functionally, catalyzes the methylthiolation of an aspartic acid residue of ribosomal protein uS12. The protein is Ribosomal protein uS12 methylthiotransferase RimO of Helicobacter pylori (strain ATCC 700392 / 26695) (Campylobacter pylori).